The chain runs to 65 residues: Lantipeptide Flvbeta.h (65 aa).

A propeptide spans 1–27 (MERYGHLAGVIPVDEIDDMFESNVIGG) (cleaved by FlvT). T28 carries the 2,3-didehydrobutyrine; by FlvM2 modification. Positions 29–33 (SSIDC) form a cross-link, lanthionine (Ser-Cys); by FlvM2. The residue at position 30 (S30) is a 2,3-didehydroalanine (Ser); by FlvM2. T44 is modified (2,3-didehydrobutyrine; by FlvM2). The segment at residues 48–54 (TVRIEFC) is a cross-link (beta-methyllanthionine (Thr-Cys); by FlvM2). Positions 56–59 (SAAC) form a cross-link, lanthionine (Ser-Cys); by FlvM2. A cross-link (beta-methyllanthionine (Thr-Cys); by FlvM2) is located at residues 60-63 (TYSC).

In terms of processing, contains LL-lanthionine, DL-lanthionine, and DL-beta-methyllanthionine, when coepressed in E.coli with the flavecin synthetase FlvM2.

Its subcellular location is the secreted. Its function is as follows. Lanthionine-containing peptide that does probably not show antibacterial activity, since its analog [+2]Flvbeta.h does not show antibacterial activity against M.luteus. Also does not show antibiotic activity when tested with [Del2]Flvalpha.a, an analog of Flvalpha.a, which is encoded by the same operon than Flvbeta.h. The bactericidal activity of lantibiotics is based on depolarization of energized bacterial cytoplasmic membranes, initiated by the formation of aqueous transmembrane pores. This Ruminococcus flavefaciens protein is Lantipeptide Flvbeta.h.